The sequence spans 101 residues: Small ribosomal subunit protein uS14 (101 aa).

Belongs to the universal ribosomal protein uS14 family. Part of the 30S ribosomal subunit. Contacts proteins S3 and S10.

Binds 16S rRNA, required for the assembly of 30S particles and may also be responsible for determining the conformation of the 16S rRNA at the A site. The protein is Small ribosomal subunit protein uS14 of Cupriavidus metallidurans (strain ATCC 43123 / DSM 2839 / NBRC 102507 / CH34) (Ralstonia metallidurans).